Reading from the N-terminus, the 348-residue chain is ECA polysaccharide chain length modulation protein (348 aa).

2 helical membrane-spanning segments follow: residues Phe31–Ala51 and Ala323–Thr343.

It belongs to the WzzB/Cld/Rol family. As to quaternary structure, probably part of a complex composed of WzxE, WzyE and WzzE.

Its subcellular location is the cell inner membrane. The protein operates within bacterial outer membrane biogenesis; enterobacterial common antigen biosynthesis. Its function is as follows. Modulates the polysaccharide chain length of enterobacterial common antigen (ECA). The sequence is that of ECA polysaccharide chain length modulation protein from Salmonella typhimurium (strain LT2 / SGSC1412 / ATCC 700720).